The following is a 606-amino-acid chain: V-type proton ATPase catalytic subunit A (606 aa).

239 to 246 (GAFGCGKT) lines the ATP pocket.

The protein belongs to the ATPase alpha/beta chains family. V-ATPase is a heteromultimeric enzyme made up of two complexes: the ATP-hydrolytic V1 complex and the proton translocation V0 complex. The V1 complex consists of three catalytic AB heterodimers that form a heterohexamer, three peripheral stalks each consisting of EG heterodimers, one central rotor including subunits D and F, and the regulatory subunits C and H. The proton translocation complex V0 consists of the proton transport subunit a, a ring of proteolipid subunits c9c'', rotary subunit d, subunits e and f, and the accessory subunits vah-19/Ac45 and vah-20/PRR.

The enzyme catalyses ATP + H2O + 4 H(+)(in) = ADP + phosphate + 5 H(+)(out). Its function is as follows. Catalytic subunit of the V1 complex of vacuolar(H+)-ATPase (V-ATPase), a multisubunit enzyme composed of a peripheral complex (V1) that hydrolyzes ATP and a membrane integral complex (V0) that translocates protons. V-ATPase is responsible for acidifying and maintaining the pH of intracellular compartments and in some cell types, is targeted to the plasma membrane, where it is responsible for acidifying the extracellular environment. Required along with other vacuolar ATPase components for the removal of protein aggregates which form in immature oocytes in the distal gonad. This removal occurs as the oocytes mature and move to the proximal gonad, is triggered by the introduction of sperm through mating and occurs before fertilization. The introduction of sperm triggers V-ATPase accumulation in proximal oocytes and induces lysosomal acidification which leads to engulfing of protein aggregates by lysosomes and subsequent clearance of the aggregates. Lysosomal acidification also leads to changes in mitochondrial morphology and function. Mitochondria in distal immature oocytes are fragmented, produce high levels of reactive oxygen species (ROS) and have high membrane potential, indicative of metabolic inactivity. In contrast, mitochondria in proximal mature oocytes are tubular with lower ROS levels and membrane potential, indicative of an active metabolic state required for aggregate mobilization before clearance. Involved in receptor-mediated endocytosis. This Caenorhabditis briggsae protein is V-type proton ATPase catalytic subunit A.